Here is a 1162-residue protein sequence, read N- to C-terminus: Lysine-specific demethylase 2A (1162 aa).

A Phosphoserine modification is found at Ser-28. Residues 148–316 (FSHTRLENMV…MQLKIYNIED (169 aa)) form the JmjC domain. Thr-209 lines the substrate pocket. Fe cation contacts are provided by His-212 and Asp-214. Lys-229 contributes to the substrate binding site. A Fe cation-binding site is contributed by His-284. The disordered stretch occupies residues 367 to 389 (GLESGNGDEEAVDREPRRLSSRR). Phosphoserine occurs at positions 390 and 394. Residue Lys-505 forms a Glycyl lysine isopeptide (Lys-Gly) (interchain with G-Cter in SUMO2) linkage. The segment at 532 to 557 (VPTIPITKPHTMKPAPRLTPVRPAAA) is disordered. Thr-550 bears the Phosphothreonine mark. Ser-558 is subject to Phosphoserine. The CXXC-type zinc finger occupies 564–610 (ARRRRVRCRKCKACVQGECGVCHYCRDMKKFGGPGRMKQSCVLRQCL). 10 residues coordinate Zn(2+): Cys-571, Cys-574, Cys-577, Cys-582, Cys-585, Cys-588, Cys-604, Cys-609, Cys-620, and Cys-623. The PHD-type zinc finger occupies 617 to 678 (SVTCSLCGEV…CWECPKCYQE (62 aa)). Residue Thr-632 is modified to Phosphothreonine. Residues Cys-642, Cys-645, His-650, Cys-653, Cys-672, and Cys-675 each coordinate Zn(2+). Position 692 is a phosphoserine (Ser-692). Residues 704-789 (PLRSCDEPLT…PSGKKELSEV (86 aa)) are disordered. Phosphothreonine is present on Thr-713. Residues Ser-718 and Ser-731 each carry the phosphoserine modification. Basic and acidic residues-rich tracts occupy residues 746–757 (SDHHSASRDERF) and 771–789 (TMVR…LSEV). Phosphoserine is present on residues Ser-825, Ser-832, Ser-869, and Ser-883. Residues 839 to 887 (HCPARTPQRGDEEGLGGEEEEEEEEEEEDDSAEEGGAARLNGRGSWAQD) are disordered. Acidic residues predominate over residues 851–871 (EGLGGEEEEEEEEEEEDDSAE). In terms of domain architecture, F-box spans 889 to 936 (DESWMQREVWMSVFRYLSRRELCECMRVCKTWYKWCCDKRLWTKIDLS). LRR repeat units lie at residues 961–982 (WTNI…LKDL) and 984–1010 (LAGC…DLRW). ADP-ribosylarginine is present on Arg-1020. LRR repeat units follow at residues 1048-1073 (GLDI…DLSH), 1074-1103 (CSHL…NMAG), 1104-1128 (CNKL…DLRG), and 1129-1156 (CKQI…SDEK).

Belongs to the JHDM1 histone demethylase family. As to quaternary structure, interacts with CBX5/HP1A; the interaction promotes CBX5 localization to chromatin. The SKP1-KDM2A complex interacts with UBB. Part of a SCF (SKP1-cullin-F-box) protein ligase complex. The cofactor is Fe(2+). Post-translationally, mono-ADP-ribosylated at Arg-1020 in response to DNA damage, leading to displacement from chromatin, resulting in increased dimethylation of histone H3 at 'Lys-36'. Widely expressed, with highest levels in brain, testis and ovary, followed by lung.

The protein localises to the nucleus. It is found in the nucleoplasm. The protein resides in the chromosome. It catalyses the reaction N(6),N(6)-dimethyl-L-lysyl(36)-[histone H3] + 2 2-oxoglutarate + 2 O2 = L-lysyl(36)-[histone H3] + 2 formaldehyde + 2 succinate + 2 CO2. Histone demethylase that specifically demethylates 'Lys-36' of histone H3, thereby playing a central role in histone code. Preferentially demethylates dimethylated H3 'Lys-36' residue while it has weak or no activity for mono- and tri-methylated H3 'Lys-36'. May also recognize and bind to some phosphorylated proteins and promote their ubiquitination and degradation. Required to maintain the heterochromatic state. Associates with centromeres and represses transcription of small non-coding RNAs that are encoded by the clusters of satellite repeats at the centromere. Required to sustain centromeric integrity and genomic stability, particularly during mitosis. Regulates circadian gene expression by repressing the transcriptional activator activity of CLOCK-BMAL1 heterodimer and RORA in a catalytically-independent manner. This Homo sapiens (Human) protein is Lysine-specific demethylase 2A (KDM2A).